Consider the following 557-residue polypeptide: Formate--tetrahydrofolate ligase 1 (557 aa).

66 to 73 (TPAGEGKT) is a binding site for ATP.

Belongs to the formate--tetrahydrofolate ligase family.

The catalysed reaction is (6S)-5,6,7,8-tetrahydrofolate + formate + ATP = (6R)-10-formyltetrahydrofolate + ADP + phosphate. It functions in the pathway one-carbon metabolism; tetrahydrofolate interconversion. The sequence is that of Formate--tetrahydrofolate ligase 1 from Streptococcus sanguinis (strain SK36).